The sequence spans 100 residues: Aspartyl/glutamyl-tRNA(Asn/Gln) amidotransferase subunit C (100 aa).

The protein belongs to the GatC family. As to quaternary structure, heterotrimer of A, B and C subunits.

The enzyme catalyses L-glutamyl-tRNA(Gln) + L-glutamine + ATP + H2O = L-glutaminyl-tRNA(Gln) + L-glutamate + ADP + phosphate + H(+). It catalyses the reaction L-aspartyl-tRNA(Asn) + L-glutamine + ATP + H2O = L-asparaginyl-tRNA(Asn) + L-glutamate + ADP + phosphate + 2 H(+). Its function is as follows. Allows the formation of correctly charged Asn-tRNA(Asn) or Gln-tRNA(Gln) through the transamidation of misacylated Asp-tRNA(Asn) or Glu-tRNA(Gln) in organisms which lack either or both of asparaginyl-tRNA or glutaminyl-tRNA synthetases. The reaction takes place in the presence of glutamine and ATP through an activated phospho-Asp-tRNA(Asn) or phospho-Glu-tRNA(Gln). In Erythrobacter litoralis (strain HTCC2594), this protein is Aspartyl/glutamyl-tRNA(Asn/Gln) amidotransferase subunit C.